Consider the following 72-residue polypeptide: Prokaryotic ubiquitin-like protein Pup (72 aa).

The span at 1-10 shows a compositional bias: gly residues; sequence MATKDTGGGQ. The interval 1–45 is disordered; sequence MATKDTGGGQQKATRSTEEVEEQAQDAQASEDLAERQEKLSDDVD. Residues 10-60 are a coiled coil; the sequence is QQKATRSTEEVEEQAQDAQASEDLAERQEKLSDDVDSVLDEIDDVLEENAE. An ARC ATPase binding region spans residues 28–66; that stretch reads QASEDLAERQEKLSDDVDSVLDEIDDVLEENAEDFVRSF. Positions 33-42 are enriched in basic and acidic residues; it reads LAERQEKLSD. A Deamidated glutamine modification is found at glutamine 72. Residue glutamine 72 forms an Isoglutamyl lysine isopeptide (Gln-Lys) (interchain with K-? in acceptor proteins) linkage.

This sequence belongs to the prokaryotic ubiquitin-like protein family. Strongly interacts with the proteasome-associated ATPase ARC through a hydrophobic interface; the interacting region of Pup lies in its C-terminal half. There is one Pup binding site per ARC hexamer ring. In terms of processing, is modified by deamidation of its C-terminal glutamine to glutamate by the deamidase Dop, a prerequisite to the subsequent pupylation process.

It functions in the pathway protein degradation; proteasomal Pup-dependent pathway. Its function is as follows. Protein modifier that is covalently attached to lysine residues of substrate proteins, thereby targeting them for proteasomal degradation. The tagging system is termed pupylation. This Streptomyces griseus subsp. griseus (strain JCM 4626 / CBS 651.72 / NBRC 13350 / KCC S-0626 / ISP 5235) protein is Prokaryotic ubiquitin-like protein Pup.